Consider the following 277-residue polypeptide: Urease accessory protein UreD (277 aa).

It belongs to the UreD family. In terms of assembly, ureD, UreF and UreG form a complex that acts as a GTP-hydrolysis-dependent molecular chaperone, activating the urease apoprotein by helping to assemble the nickel containing metallocenter of UreC. The UreE protein probably delivers the nickel.

It localises to the cytoplasm. Its function is as follows. Required for maturation of urease via the functional incorporation of the urease nickel metallocenter. This is Urease accessory protein UreD from Pseudomonas putida (strain W619).